A 146-amino-acid chain; its full sequence is Large ribosomal subunit protein uL13 (146 aa).

Belongs to the universal ribosomal protein uL13 family. In terms of assembly, part of the 50S ribosomal subunit.

Its function is as follows. This protein is one of the early assembly proteins of the 50S ribosomal subunit, although it is not seen to bind rRNA by itself. It is important during the early stages of 50S assembly. This is Large ribosomal subunit protein uL13 from Sulfurisphaera tokodaii (strain DSM 16993 / JCM 10545 / NBRC 100140 / 7) (Sulfolobus tokodaii).